The sequence spans 338 residues: Lipoate-protein ligase A (338 aa).

The 188-residue stretch at 29 to 216 (PATQRVLFLW…AFFAHYGERV (188 aa)) folds into the BPL/LPL catalytic domain. Residues R71, 76–79 (GAVF), and K134 contribute to the ATP site. K134 lines the (R)-lipoate pocket.

The protein belongs to the LplA family. Monomer.

The protein localises to the cytoplasm. The catalysed reaction is L-lysyl-[lipoyl-carrier protein] + (R)-lipoate + ATP = N(6)-[(R)-lipoyl]-L-lysyl-[lipoyl-carrier protein] + AMP + diphosphate + H(+). The protein operates within protein modification; protein lipoylation via exogenous pathway; protein N(6)-(lipoyl)lysine from lipoate: step 1/2. It participates in protein modification; protein lipoylation via exogenous pathway; protein N(6)-(lipoyl)lysine from lipoate: step 2/2. In terms of biological role, catalyzes both the ATP-dependent activation of exogenously supplied lipoate to lipoyl-AMP and the transfer of the activated lipoyl onto the lipoyl domains of lipoate-dependent enzymes. This chain is Lipoate-protein ligase A, found in Escherichia coli O157:H7.